A 64-amino-acid chain; its full sequence is Antimicrobial peptide THP2 (64 aa).

Positions 1-28 (MRILYLLFSLLFLALQVSPGLSSPKRDM) are cleaved as a signal peptide. 3 disulfides stabilise this stretch: C31–C57, C36–C51, and C41–C58.

In terms of tissue distribution, expressed in circulating heterophil granulocytes and bone marrow (at protein level).

It localises to the secreted. Antibacterial activity against the Gram-positive bacterium Staphylococcus aureus. Lacks antibacterial activity against the Gram-negative bacterium E.coli K-12. The chain is Antimicrobial peptide THP2 from Meleagris gallopavo (Wild turkey).